The following is a 392-amino-acid chain: RNA-binding protein 42 (392 aa).

The region spanning 293–371 (FRIFCGDLGN…RPIKLRKSQW (79 aa)) is the RRM domain. The interval 372-392 (KDRNMDVVRKKQREKKKLGLR) is disordered. Over residues 381-392 (KKQREKKKLGLR) the composition is skewed to basic residues.

Belongs to the RRM RBM42 family.

The protein resides in the nucleus. Its subcellular location is the cytoplasm. Functionally, may bind RNA. This is RNA-binding protein 42 (rbm42) from Xenopus tropicalis (Western clawed frog).